The following is a 951-amino-acid chain: MEKTYNPQDIEQPLYEHWEKQGYFKPNGDESQESFCIMIPPPNVTGSLHMGHAFQQTIMDTMIRYQRMQGKNTLWQVGTDHAGIATQMVVERKIAAEEGKTRHDYGREAFIDKIWEWKAESGGTITRQMRRLGNSVDWERERFTMDEGLSNAVKEVFVRLYKEDLIYRGKRLVNWDPKLRTAISDLEVENRESKGSMWHIRYPLADGAKTADGKDYLVVATTRPETLLGDTGVAVNPEDPRYKDLIGKYVILPLVNRRIPIVGDEHADMEKGTGCVKITPAHDFNDYEVGKRHALPMINILTFDGDIRESAQVFDTKGNESDVYSSEIPAEFQKLERFAARKAVVAAVDALGLLEEIKPHDLTVPYGDRGGVVIEPMLTDQWYVRADVLAKPAVEAVENGDIQFVPKQYENMYFSWMRDIQDWCISRQLWWGHRIPAWYDEAGNVYVGRNEDEVRKENNLGADVVLRQDEDVLDTWFSSALWTFSTLGWPENTDALRQFHPTSVMVSGFDIIFFWIARMIMMTMHFIKDENGKPQVPFHTVYMTGLIRDDEGQKMSKSKGNVIDPLDMVDGISLPELLEKRTGNMMQPQLADKIRKRTEKQFPNGIEPHGTDALRFTLAALASTGRDINWDMKRLEGYRNFCNKLWNASRFVLMNTEGQDCGFNGGEMTLSLADRWILAEFNQTIKAYREALDSFRFDIAAGILYEFTWNQFCDWYLELTKPVMNGGTEAELRGTRHTLVTVLEGLLRLAHPIIPFITETIWQRVKVLCGITADTIMLQPFPQYDASQVDEAALADTEWLKQAIVAVRNIRAEMNIAPGKPLELLLRGCSADAERRVNENRGFLQTLARLESITVLPADDKGPVSVTKIIDGAELLIPMAGLINKEDELARLAKEVAKIEGEISRIENKLANEGFVARAPEAVIAKEREKLEGYAEAKAKLIEQQAVIAAL.

The 'HIGH' region signature appears at 42-52; that stretch reads PNVTGSLHMGH. A 'KMSKS' region motif is present at residues 554–558; the sequence is KMSKS. K557 contributes to the ATP binding site. A coiled-coil region spans residues 880–944; the sequence is AGLINKEDEL…AEAKAKLIEQ (65 aa).

The protein belongs to the class-I aminoacyl-tRNA synthetase family. ValS type 1 subfamily. As to quaternary structure, monomer.

It is found in the cytoplasm. The enzyme catalyses tRNA(Val) + L-valine + ATP = L-valyl-tRNA(Val) + AMP + diphosphate. In terms of biological role, catalyzes the attachment of valine to tRNA(Val). As ValRS can inadvertently accommodate and process structurally similar amino acids such as threonine, to avoid such errors, it has a 'posttransfer' editing activity that hydrolyzes mischarged Thr-tRNA(Val) in a tRNA-dependent manner. This chain is Valine--tRNA ligase (valS), found in Escherichia coli (strain K12).